Consider the following 123-residue polypeptide: Small ribosomal subunit protein uS12c (123 aa).

Residues 1–20 show a composition bias toward polar residues; sequence MPTIQQLIRNTRQPTQNRTK. The tract at residues 1 to 27 is disordered; the sequence is MPTIQQLIRNTRQPTQNRTKSPALKAC.

The protein belongs to the universal ribosomal protein uS12 family. In terms of assembly, part of the 30S ribosomal subunit.

The protein resides in the plastid. It is found in the chloroplast. Its function is as follows. With S4 and S5 plays an important role in translational accuracy. Located at the interface of the 30S and 50S subunits. This chain is Small ribosomal subunit protein uS12c (rps12), found in Zygnema circumcarinatum (Green alga).